The primary structure comprises 155 residues: Urease accessory protein UreE (155 aa).

This sequence belongs to the UreE family.

It localises to the cytoplasm. Its function is as follows. Involved in urease metallocenter assembly. Binds nickel. Probably functions as a nickel donor during metallocenter assembly. The protein is Urease accessory protein UreE of Deinococcus radiodurans (strain ATCC 13939 / DSM 20539 / JCM 16871 / CCUG 27074 / LMG 4051 / NBRC 15346 / NCIMB 9279 / VKM B-1422 / R1).